The sequence spans 447 residues: Tubulin beta-2 chain (447 aa).

The GTP site is built by Gln-11, Glu-69, Ser-138, Gly-142, Thr-143, Gly-144, Asn-204, and Asn-226. Glu-69 provides a ligand contact to Mg(2+). Positions 419–428 are enriched in polar residues; it reads VSEYQQYQDA. Positions 419 to 447 are disordered; the sequence is VSEYQQYQDATSDEEGEYEDEDQEPEEDM. Over residues 429-447 the composition is skewed to acidic residues; it reads TSDEEGEYEDEDQEPEEDM.

Belongs to the tubulin family. In terms of assembly, dimer of alpha and beta chains. A typical microtubule is a hollow water-filled tube with an outer diameter of 25 nm and an inner diameter of 15 nM. Alpha-beta heterodimers associate head-to-tail to form protofilaments running lengthwise along the microtubule wall with the beta-tubulin subunit facing the microtubule plus end conferring a structural polarity. Microtubules usually have 13 protofilaments but different protofilament numbers can be found in some organisms and specialized cells. Requires Mg(2+) as cofactor.

The protein resides in the cytoplasm. Its subcellular location is the cytoskeleton. Tubulin is the major constituent of microtubules, a cylinder consisting of laterally associated linear protofilaments composed of alpha- and beta-tubulin heterodimers. Microtubules grow by the addition of GTP-tubulin dimers to the microtubule end, where a stabilizing cap forms. Below the cap, tubulin dimers are in GDP-bound state, owing to GTPase activity of alpha-tubulin. The sequence is that of Tubulin beta-2 chain (TUBB2) from Triticum aestivum (Wheat).